The following is a 378-amino-acid chain: Glutamate 5-kinase (378 aa).

Residue Lys19 coordinates ATP. Substrate is bound by residues Ser59, Asp146, and Asn158. 178–179 provides a ligand contact to ATP; that stretch reads TD. A PUA domain is found at 285–363; it reads RGSVAVDAGA…SEFERLLGYT (79 aa).

The protein belongs to the glutamate 5-kinase family.

Its subcellular location is the cytoplasm. The enzyme catalyses L-glutamate + ATP = L-glutamyl 5-phosphate + ADP. It functions in the pathway amino-acid biosynthesis; L-proline biosynthesis; L-glutamate 5-semialdehyde from L-glutamate: step 1/2. Functionally, catalyzes the transfer of a phosphate group to glutamate to form L-glutamate 5-phosphate. The chain is Glutamate 5-kinase from Polaromonas sp. (strain JS666 / ATCC BAA-500).